We begin with the raw amino-acid sequence, 520 residues long: Keratin, type II cytoskeletal 8 (520 aa).

Residues 1-19 (MSTYSKKTSYTVKSSSSGS) show a composition bias toward low complexity. Residues 1-20 (MSTYSKKTSYTVKSSSSGSI) form a disordered region. The segment at 2 to 114 (STYSKKTSYT…DPNIQIVRTQ (113 aa)) is head. A Phosphoserine modification is found at Ser28. The interval 115 to 150 (EKEQIKTLNNRFASFIDKVRFLEQQNKMLETKWSLL) is coil 1A. An IF rod domain is found at 115-426 (EKEQIKTLNN…KLLEGEEDRL (312 aa)). Positions 151–166 (QNQTATRSNIDAMFEA) are linker 1. The segment at 168–259 (IANLRRQLDS…QIFEEEIREL (92 aa)) is coil 1B. The tract at residues 260–283 (QSQIKDTSVVVEMDNSRNLDMDAI) is linker 12. Residues 284 to 422 (VAEVRAQYED…ATYRKLLEGE (139 aa)) are coil 2. The interval 423-520 (EDRLATGIKA…VSESSEVVQD (98 aa)) is tail.

The protein belongs to the intermediate filament family. Heterotetramer of two type I and two type II keratins. Keratin-8 associates with keratin-18. In terms of tissue distribution, expressed in simple epithelia.

Its subcellular location is the cytoplasm. The protein localises to the nucleus. It localises to the nucleoplasm. It is found in the nucleus matrix. Functionally, together with KRT19, helps to link the contractile apparatus to dystrophin at the costameres of striated muscle. The polypeptide is Keratin, type II cytoskeletal 8 (Danio rerio (Zebrafish)).